A 393-amino-acid polypeptide reads, in one-letter code: Cytochrome b (393 aa).

A run of 4 helical transmembrane segments spans residues 32-52, 76-98, 113-133, and 179-199; these read FGSL…TLAM, WLIR…LHMG, VWTL…LGYV, and FFAL…MHLI. Heme b is bound by residues H82 and H96. Heme b-binding residues include H183 and H197. H202 contributes to the a ubiquinone binding site. A run of 4 helical transmembrane segments spans residues 226–246, 290–310, 322–342, and 349–369; these read FIFK…IFVF, LLGV…PFTD, LSKI…KLGA, and FIEF…IIVP.

Belongs to the cytochrome b family. In terms of assembly, fungal cytochrome b-c1 complex contains 10 subunits; 3 respiratory subunits, 2 core proteins and 5 low-molecular weight proteins. Cytochrome b-c1 complex is a homodimer. Heme b is required as a cofactor.

Its subcellular location is the mitochondrion inner membrane. In terms of biological role, component of the ubiquinol-cytochrome c reductase complex (complex III or cytochrome b-c1 complex) that is part of the mitochondrial respiratory chain. The b-c1 complex mediates electron transfer from ubiquinol to cytochrome c. Contributes to the generation of a proton gradient across the mitochondrial membrane that is then used for ATP synthesis. The sequence is that of Cytochrome b (COB) from Venturia inaequalis (Apple scab fungus).